Consider the following 104-residue polypeptide: Large ribosomal subunit protein bL21 (104 aa).

The protein belongs to the bacterial ribosomal protein bL21 family. Part of the 50S ribosomal subunit. Contacts protein L20.

Functionally, this protein binds to 23S rRNA in the presence of protein L20. The sequence is that of Large ribosomal subunit protein bL21 from Clostridium botulinum (strain Kyoto / Type A2).